The primary structure comprises 465 residues: 3-isopropylmalate dehydratase large subunit (465 aa).

[4Fe-4S] cluster is bound by residues cysteine 347, cysteine 407, and cysteine 410.

It belongs to the aconitase/IPM isomerase family. LeuC type 1 subfamily. As to quaternary structure, heterodimer of LeuC and LeuD. Requires [4Fe-4S] cluster as cofactor.

The enzyme catalyses (2R,3S)-3-isopropylmalate = (2S)-2-isopropylmalate. It functions in the pathway amino-acid biosynthesis; L-leucine biosynthesis; L-leucine from 3-methyl-2-oxobutanoate: step 2/4. Catalyzes the isomerization between 2-isopropylmalate and 3-isopropylmalate, via the formation of 2-isopropylmaleate. In Buchnera aphidicola subsp. Pemphigus spyrothecae, this protein is 3-isopropylmalate dehydratase large subunit.